We begin with the raw amino-acid sequence, 303 residues long: UDP-3-O-acyl-N-acetylglucosamine deacetylase (303 aa).

Zn(2+) contacts are provided by histidine 78, histidine 237, and aspartate 241. The active-site Proton donor is histidine 264.

This sequence belongs to the LpxC family. The cofactor is Zn(2+).

The enzyme catalyses a UDP-3-O-[(3R)-3-hydroxyacyl]-N-acetyl-alpha-D-glucosamine + H2O = a UDP-3-O-[(3R)-3-hydroxyacyl]-alpha-D-glucosamine + acetate. It participates in glycolipid biosynthesis; lipid IV(A) biosynthesis; lipid IV(A) from (3R)-3-hydroxytetradecanoyl-[acyl-carrier-protein] and UDP-N-acetyl-alpha-D-glucosamine: step 2/6. In terms of biological role, catalyzes the hydrolysis of UDP-3-O-myristoyl-N-acetylglucosamine to form UDP-3-O-myristoylglucosamine and acetate, the committed step in lipid A biosynthesis. The protein is UDP-3-O-acyl-N-acetylglucosamine deacetylase of Pseudomonas paraeruginosa (strain DSM 24068 / PA7) (Pseudomonas aeruginosa (strain PA7)).